Consider the following 307-residue polypeptide: Ras-related protein RabR (307 aa).

Residues 1-10 (MTTTTLLSES) are compositionally biased toward polar residues. The interval 1-45 (MTTTTLLSESTNNSNNTNNNTNNNTNNTMNNNNNNNNNNTIGNNN) is disordered. Low complexity predominate over residues 11–45 (TNNSNNTNNNTNNNTNNTMNNNNNNNNNNTIGNNN). Position 61–68 (61–68 (GDEEVGKG)) interacts with GTP. The Effector region motif lies at 83–92 (ENLYNIEVDR). Position 122 to 126 (122 to 126 (NFHMH)) interacts with GTP. Over residues 175–185 (NFNCQSNSRNS) the composition is skewed to low complexity. A disordered region spans residues 175 to 223 (NFNCQSNSRNSTNYNRHSVGNHCPNSPQKGEKENNTHSSTAPPAPPPLP). Residues 186 to 202 (TNYNRHSVGNHCPNSPQ) are compositionally biased toward polar residues. A GTP-binding site is contributed by 230–233 (NKCD). Cys304 carries the cysteine methyl ester modification. Cys304 carries the S-geranylgeranyl cysteine lipid modification. Residues 305–307 (NLM) constitute a propeptide, removed in mature form.

The protein belongs to the small GTPase superfamily. Rab family.

The protein resides in the cell membrane. This chain is Ras-related protein RabR (rabR), found in Dictyostelium discoideum (Social amoeba).